We begin with the raw amino-acid sequence, 365 residues long: Putative ankyrin repeat protein R903 (365 aa).

10 ANK repeats span residues 38-67 (NINS…DIRF), 68-97 (QNNE…DIFI), 99-127 (NNFC…KFSN), 129-158 (SKPI…NINK), 184-213 (KFKD…GNIT), 214-243 (VSNN…RFPR), 245-273 (SNEL…SIVD), 275-298 (LLNI…LKNV), 299-328 (NLQK…NPDE), and 330-361 (RTYL…KLQS).

The protein is Putative ankyrin repeat protein R903 of Acanthamoeba polyphaga mimivirus (APMV).